The chain runs to 206 residues: Large ribosomal subunit protein uL4 (206 aa).

Positions 43 to 78 are disordered; that stretch reads ARSGNRKQKDREEVKHTTKKPWRQKGTGRARAGMSS. Positions 49–58 are enriched in basic and acidic residues; the sequence is KQKDREEVKH. The segment covering 59–70 has biased composition (basic residues); that stretch reads TTKKPWRQKGTG.

The protein belongs to the universal ribosomal protein uL4 family. Part of the 50S ribosomal subunit.

Functionally, one of the primary rRNA binding proteins, this protein initially binds near the 5'-end of the 23S rRNA. It is important during the early stages of 50S assembly. It makes multiple contacts with different domains of the 23S rRNA in the assembled 50S subunit and ribosome. In terms of biological role, forms part of the polypeptide exit tunnel. The sequence is that of Large ribosomal subunit protein uL4 from Cupriavidus metallidurans (strain ATCC 43123 / DSM 2839 / NBRC 102507 / CH34) (Ralstonia metallidurans).